Reading from the N-terminus, the 121-residue chain is Cell division protein FtsB (121 aa).

The Cytoplasmic segment spans residues 1-6 (MRNWRW). Residues 7–24 (LLLVLAVLLAWLQYRFWF) form a helical membrane-spanning segment. Residues 25 to 121 (GPGNSGEVMM…PASTDPVDHP (97 aa)) are Periplasmic-facing. Residues 31–66 (EVMMLEAQVAHQTQDNEGLRQRNQALAAEVKDLKDG) adopt a coiled-coil conformation. A disordered region spans residues 94-121 (APLPAPASPETAAPAQQAPASTDPVDHP). The span at 101-121 (SPETAAPAQQAPASTDPVDHP) shows a compositional bias: low complexity.

It belongs to the FtsB family. As to quaternary structure, part of a complex composed of FtsB, FtsL and FtsQ.

It is found in the cell inner membrane. Essential cell division protein. May link together the upstream cell division proteins, which are predominantly cytoplasmic, with the downstream cell division proteins, which are predominantly periplasmic. This is Cell division protein FtsB from Xanthomonas oryzae pv. oryzae (strain MAFF 311018).